Here is a 1471-residue protein sequence, read N- to C-terminus: MSFEVGTKCWYPHKEQGWIGGEVTKNDFFEGTFHLELKLEDGETVSIETNSFENDDDHPTLPVLRNPPILESTDDLTTLSYLNEPAVLHAIKKRYMNGQIYTYSGIVLIAANPFDKVDHLYSREMIQNYSSKRKDELEPHLFAIAEEAYRFMVHEKANQTVVVSGESGAGKTVSAKYIMRYFASVQESNNREGEVEMSQIESQILATNPIMEAFGNAKTTRNDNSSRFGKYLQILFDENTTIRGSKIRTYLLEKSRLVYQPETERNYHIFYQILEGLPEPVKQELHLSSPKDYHYTNQGGQPNIAGIDEAREYKITTDALSLVGINHETQLGIFKILAGLLHIGNIEMKMTRNDASLSSEEQNLQIACELLGIDPFNFAKWIVKKQIVTRSEKIVTNLNYNQALIARDSVAKFIYSTLFDWLVDNINKTLYDPELDQQDHVFSFIGILDIYGFEHFEKNSFEQFCINYANEKLQQEFNQHVFKLEQEEYVKEEIEWSFIEFSDNQPCIDLIENKLGILSLLDEESRLPSGSDESWASKLYSAFNKPPSNEVFSKPRFGQTKFIVSHYAVDVEYEVEGFIEKNRDSVSLGHLDVFKATTNPIFKQILDNRELRSDDAPEEQNTEKKIMIPARLSQKKPTLGSMFKKSLGELMAIINSTNVHYIRCIKPNSEKKPWEFDNLMVLSQLRACGVLETIRISCAGFPSRWTFDEFVQRYFLLTDYSLWSGILYNPDLPKEAIVNFCQSILDATISDSAKYQIGNTKIFFKAGMLAFLEKLRTNKMNEICIIIQKKIRARYYRLQYLQTMESIKKCQSQIRSLLVRTRVDHELKTRAAILLQTNIRALWKREYYRAAIGQIIKLQCTCKRKLILDSVNRKFMLMAAVIIQSYIRSYGHKTDYRTLKRSSILVQSAMRMQLARRRYIVLQKEVEERNIRASYGIGLLEEAIEFKNSFILNLEMLNDSYTRLTQLLQGDLSNIPSKQRQEYETIVNGYNDKISKLKTLQVEIMNTLNKKNALKERKKKQSSLIQSHMQSLAAIKGNKPSRLSDEVKSMKQELAFIENVIAQDFTTTYSANKNDKVKGLGIAGQQVKPKLVNVIRRESGNPDLLELLMDLNCYTLEVTEGYLKKVNVTEVNGDNVLGPIHVITTVVSSLVRNGLLIQSSKFISKVLLTVESIVMSLPKDETMLGGIFWLSNLSRLPAFAANQKTLYEANGGDEKDKLTLIYLNDLENETLKVFDKIYSTWLVKFMKHASAHIEIFDMVLNEKLFKNSGDEKFAKLFTFLNEFDAVLCKFQVVDSMHTKIFNDTLKYLNVMLFNDLITKCPALNWKYGYEVDRNIERLVSWFEPRIEDVRPNLIQIIQAVKILQLKISNLNEFKLLFDFWYALNPAQIQAILLKYKPANKGEAGVPNEILNYLANVIKRENLSLPGKMEIMLSAQFDSAKNHLRYDTSAITQNSNTEGLATVSKIIKLDRK.

The 54-residue stretch at 4–57 folds into the Myosin N-terminal SH3-like domain; that stretch reads EVGTKCWYPHKEQGWIGGEVTKNDFFEGTFHLELKLEDGETVSIETNSFENDDD. Positions 71–777 constitute a Myosin motor domain; sequence ESTDDLTTLS…MLAFLEKLRT (707 aa). ATP is bound at residue 165–172; sequence GESGAGKT. An actin-binding region spans residues 647–669; it reads LGELMAIINSTNVHYIRCIKPNS. IQ domains are found at residues 781-801, 804-824, 829-849, 876-898, and 899-928; these read NEIC…LQYL, MESI…TRVD, TRAA…EYYR, MLMA…DYRT, and LKRS…EVEE. Residues 938-1063 are a coiled coil; the sequence is GLLEEAIEFK…LAFIENVIAQ (126 aa). The Dilute domain maps to 1164–1419; that stretch reads SKVLLTVESI…LNYLANVIKR (256 aa).

This sequence belongs to the TRAFAC class myosin-kinesin ATPase superfamily. Myosin family. As to quaternary structure, interacts with SHE2 and SHE3.

It localises to the bud. Part of the mRNA localization machinery that restricts accumulation of certain proteins to the bud and in the daughter cell. Recruited to specific mRNAs including the ASH1 mRNA, coding for a repressor of the HO endonuclease, via its interaction with SHE3. This is Myosin-4 (MYO4) from Saccharomyces cerevisiae (strain ATCC 204508 / S288c) (Baker's yeast).